The following is a 585-amino-acid chain: Arginine--tRNA ligase (585 aa).

The short motif at 131-141 is the 'HIGH' region element; the sequence is ANPTGPMHVGH.

Belongs to the class-I aminoacyl-tRNA synthetase family. As to quaternary structure, monomer.

Its subcellular location is the cytoplasm. The enzyme catalyses tRNA(Arg) + L-arginine + ATP = L-arginyl-tRNA(Arg) + AMP + diphosphate. This chain is Arginine--tRNA ligase, found in Rhizobium etli (strain ATCC 51251 / DSM 11541 / JCM 21823 / NBRC 15573 / CFN 42).